We begin with the raw amino-acid sequence, 106 residues long: ATP-dependent Clp protease adapter protein ClpS (106 aa).

Belongs to the ClpS family. Binds to the N-terminal domain of the chaperone ClpA.

Its function is as follows. Involved in the modulation of the specificity of the ClpAP-mediated ATP-dependent protein degradation. The protein is ATP-dependent Clp protease adapter protein ClpS of Cronobacter sakazakii (strain ATCC BAA-894) (Enterobacter sakazakii).